The primary structure comprises 297 residues: Transcription factor MYB1R1 (297 aa).

The disordered stretch occupies residues 44 to 96 (DLSQYEHPNANNNNNGGDNNESSKVAQDEGYASADDAVQHQSNSGRERKRGVP). Residues 52-63 (NANNNNNGGDNN) show a composition bias toward low complexity. The region spanning 89 to 145 (RERKRGVPWTEEEHKLFLLGLQKVGKGDWRGISRNFVKTRTPTQVASHAQKYFLRRS) is the HTH myb-type domain. A DNA-binding region (H-T-H motif) is located at residues 117 to 141 (WRGISRNFVKTRTPTQVASHAQKYF).

It is found in the nucleus. It localises to the cytoplasm. Its subcellular location is the cytosol. Functionally, binds selectively to the DNA sequence 5'-[GA]GATAA-3' and may act as a transcription factor involved in the regulation of drought-responsive genes. Enhances stomatal closure in response to abscisic acid (ABA). Confers drought and salt tolerance. The sequence is that of Transcription factor MYB1R1 from Solanum tuberosum (Potato).